The following is a 209-amino-acid chain: Nascent polypeptide-associated complex subunit alpha-like protein 5 (209 aa).

A disordered region spans residues 23–71 (EKEDDVVVEDVKDGEEEDDDEDDEDVEVEGEGGNENAKQSRSEKKSRKA). The span at 25 to 54 (EDDVVVEDVKDGEEEDDDEDDEDVEVEGEG) shows a compositional bias: acidic residues. An NAC-A/B domain is found at 62–127 (SRSEKKSRKA…AKVDDLSSQL (66 aa)). Residues 170–207 (VEARDIDLVMTQAGVSKAKAVSALKANDGDIVSAIMEL) enclose the UBA domain.

This sequence belongs to the NAC-alpha family.

Functionally, may promote appropriate targeting of ribosome-nascent polypeptide complexes. The sequence is that of Nascent polypeptide-associated complex subunit alpha-like protein 5 from Arabidopsis thaliana (Mouse-ear cress).